The primary structure comprises 381 residues: Chaperone protein DnaJ (381 aa).

The 66-residue stretch at 5-70 (DYYEVLGVSR…DKKAAYDRYG (66 aa)) folds into the J domain. A CR-type zinc finger spans residues 140-218 (GVQKTINVPA…CHGAGRVEKE (79 aa)). Zn(2+) is bound by residues cysteine 153, cysteine 156, cysteine 170, cysteine 173, cysteine 192, cysteine 195, cysteine 206, and cysteine 209. 4 CXXCXGXG motif repeats span residues 153 to 160 (CDACKGTG), 170 to 177 (CPTCSGMG), 192 to 199 (CPTCNGMG), and 206 to 213 (CKVCHGAG).

This sequence belongs to the DnaJ family. Homodimer. Requires Zn(2+) as cofactor.

It is found in the cytoplasm. Its function is as follows. Participates actively in the response to hyperosmotic and heat shock by preventing the aggregation of stress-denatured proteins and by disaggregating proteins, also in an autonomous, DnaK-independent fashion. Unfolded proteins bind initially to DnaJ; upon interaction with the DnaJ-bound protein, DnaK hydrolyzes its bound ATP, resulting in the formation of a stable complex. GrpE releases ADP from DnaK; ATP binding to DnaK triggers the release of the substrate protein, thus completing the reaction cycle. Several rounds of ATP-dependent interactions between DnaJ, DnaK and GrpE are required for fully efficient folding. Also involved, together with DnaK and GrpE, in the DNA replication of plasmids through activation of initiation proteins. The polypeptide is Chaperone protein DnaJ (Cereibacter sphaeroides (strain KD131 / KCTC 12085) (Rhodobacter sphaeroides)).